The primary structure comprises 306 residues: tRNA-cytidine(32) 2-sulfurtransferase (306 aa).

Positions 1 to 25 (MSAVISLPDPQPRAARDPRVAEREQ) are disordered. Basic and acidic residues predominate over residues 14-25 (AARDPRVAEREQ). A PP-loop motif motif is present at residues 57-62 (SGGKDS). Cys132, Cys135, and Cys223 together coordinate [4Fe-4S] cluster. The tract at residues 286–306 (AHAWLAGSPADADADPETPTV) is disordered. A compositionally biased stretch (acidic residues) spans 297 to 306 (ADADPETPTV).

Belongs to the TtcA family. Homodimer. Mg(2+) is required as a cofactor. The cofactor is [4Fe-4S] cluster.

It is found in the cytoplasm. It catalyses the reaction cytidine(32) in tRNA + S-sulfanyl-L-cysteinyl-[cysteine desulfurase] + AH2 + ATP = 2-thiocytidine(32) in tRNA + L-cysteinyl-[cysteine desulfurase] + A + AMP + diphosphate + H(+). The protein operates within tRNA modification. Catalyzes the ATP-dependent 2-thiolation of cytidine in position 32 of tRNA, to form 2-thiocytidine (s(2)C32). The sulfur atoms are provided by the cysteine/cysteine desulfurase (IscS) system. The chain is tRNA-cytidine(32) 2-sulfurtransferase from Stenotrophomonas maltophilia (strain K279a).